Consider the following 301-residue polypeptide: GTPase Era (301 aa).

One can recognise an Era-type G domain in the interval 7 to 175 (YCGFIAIVGR…AGIVRKHLPE (169 aa)). A G1 region spans residues 15 to 22 (GRPNVGKS). 15-22 (GRPNVGKS) contacts GTP. Residues 41–45 (QTTRH) form a G2 region. Positions 62–65 (DTPG) are G3. Residues 62-66 (DTPGL) and 124-127 (NKVD) each bind GTP. Positions 124 to 127 (NKVD) are G4. Residues 154–156 (LSA) are G5. Residues 198–283 (IREKLMRFLG…HLELWVKVKS (86 aa)) enclose the KH type-2 domain.

This sequence belongs to the TRAFAC class TrmE-Era-EngA-EngB-Septin-like GTPase superfamily. Era GTPase family. Monomer.

It is found in the cytoplasm. The protein localises to the cell inner membrane. Functionally, an essential GTPase that binds both GDP and GTP, with rapid nucleotide exchange. Plays a role in 16S rRNA processing and 30S ribosomal subunit biogenesis and possibly also in cell cycle regulation and energy metabolism. In Enterobacter sp. (strain 638), this protein is GTPase Era.